A 612-amino-acid chain; its full sequence is uncharacterized protein (612 aa).

The J domain occupies 8–75; sequence ELYLALGLPK…SKKEIYDNFG (68 aa). The chain crosses the membrane as a helical span at residues 445–465; the sequence is AVFWGLVFPITSILGVEQFFL.

The protein belongs to the DnaJ family.

Its subcellular location is the membrane. This is an uncharacterized protein from Schizosaccharomyces pombe (strain 972 / ATCC 24843) (Fission yeast).